Consider the following 452-residue polypeptide: Glycine receptor subunit alpha-2 (452 aa).

Positions 1 to 27 (MNRQLVNILTALFAFFLETNHFRTAFC) are cleaved as a signal peptide. At 28–256 (KDHDSRSGKQ…KFHLERQMGY (229 aa)) the chain is on the extracellular side. The N-linked (GlcNAc...) asparagine glycan is linked to Asn72. Arg99 is a glycine binding site. Residue Arg99 participates in strychnine binding. Residue Asn103 is glycosylated (N-linked (GlcNAc...) asparagine). Ser163 serves as a coordination point for glycine. An intrachain disulfide couples Cys172 to Cys186. Zn(2+) contacts are provided by Glu226 and Glu228. A disulfide bridge links Cys232 with Cys243. Residue Thr238 coordinates glycine. His249 serves as a coordination point for Zn(2+). A helical transmembrane segment spans residues 257–278 (YLIQMYIPSLLIVILSWVSFWI). The Cytoplasmic portion of the chain corresponds to 279 to 283 (NMDAA). A helical transmembrane segment spans residues 284 to 304 (PARVALGITTVLTMTTQSSGS). The Extracellular segment spans residues 305 to 315 (RASLPKVSYVK). The chain crosses the membrane as a helical span at residues 316-336 (AIDIWMAVCLLFVFAALLEYA). Residues 337–420 (AVNFVSRQHK…FVDRAKRIDT (84 aa)) are Cytoplasmic-facing. A helical membrane pass occupies residues 421–441 (ISRAAFPLAFLIFNIFYWITY). Over 442–452 (KIIRHEDVHKK) the chain is Extracellular.

It belongs to the ligand-gated ion channel (TC 1.A.9) family. Glycine receptor (TC 1.A.9.3) subfamily. GLRA2 sub-subfamily. As to quaternary structure, interacts with GLRB. Heteropentamer composed of GLRA2 and GLRB. Functional GLRB-GLRA2 heteropentamers contain four GLRA2 subunits and one GLRB subunit, although alternative subunit composition cannot be excluded. Homopentamer (in vitro). Both homopentamers and heteropentamers form functional ion channels, but their characteristics are subtly different.

Its subcellular location is the postsynaptic cell membrane. The protein localises to the synapse. It localises to the cell membrane. It is found in the cell projection. It catalyses the reaction chloride(in) = chloride(out). Channel opening is triggered by extracellular glycine. Channel opening is also triggered by taurine and beta-alanine. Inhibited by strychnine. Inhibited by picrotoxin. Channel activity is potentiated by 10-100 uM Zn(2+). Channel activity is marginally increased by 50 mM ethanol; it is strongly increased by a combination of 0.5 uM Zn(2+) and 50 mM ethanol. Channel activity is inhibited by 100-1000 uM Zn(2+). Subunit of heteromeric glycine-gated chloride channels. Plays a role in synaptic plasticity. Contributes to the generation of inhibitory postsynaptic currents, and is involved in the down-regulation of neuronal excitability. Plays a role in cellular responses to ethanol. The sequence is that of Glycine receptor subunit alpha-2 from Homo sapiens (Human).